A 429-amino-acid chain; its full sequence is GTPase Obg (429 aa).

The Obg domain maps to 1-158 (MFVDQVKIYV…RNVQLELKVL (158 aa)). Positions 124 to 145 (RGNKRFATPANPAPELSENGEP) are disordered. In terms of domain architecture, OBG-type G spans 159-329 (ADVGLVGFPS…LLLAIADKLE (171 aa)). GTP contacts are provided by residues 165 to 172 (GFPSVGKS), 190 to 194 (FTTIV), 212 to 215 (DLPG), 282 to 285 (NKMD), and 310 to 312 (SAV). Ser-172 and Thr-192 together coordinate Mg(2+). The OCT domain occupies 351–429 (KYVAEEPDFE…LLDYEFEFMD (79 aa)).

Belongs to the TRAFAC class OBG-HflX-like GTPase superfamily. OBG GTPase family. Monomer. The cofactor is Mg(2+).

It localises to the cytoplasm. In terms of biological role, an essential GTPase which binds GTP, GDP and possibly (p)ppGpp with moderate affinity, with high nucleotide exchange rates and a fairly low GTP hydrolysis rate. Plays a role in control of the cell cycle, stress response, ribosome biogenesis and in those bacteria that undergo differentiation, in morphogenesis control. The polypeptide is GTPase Obg (Listeria monocytogenes serotype 4b (strain F2365)).